An 86-amino-acid chain; its full sequence is Venom metalloproteinase (86 aa).

Asp-7 serves as a coordination point for Ca(2+). His-67 lines the Zn(2+) pocket. Glu-68 is an active-site residue. 2 residues coordinate Zn(2+): His-71 and His-77.

This sequence belongs to the venom metalloproteinase (M12B) family. Zn(2+) serves as cofactor. In terms of tissue distribution, expressed by the venom gland.

It localises to the secreted. The sequence is that of Venom metalloproteinase from Tityus serrulatus (Brazilian scorpion).